The sequence spans 446 residues: Protein IQ-DOMAIN 19 (446 aa).

Residues 93–140 form a disordered region; sequence IPGTPKEKRRWSFRRSSATGPPPPACAITLKDSPPPPPPPPPPPPLQQ. A compositionally biased stretch (pro residues) spans 125-139; that stretch reads SPPPPPPPPPPPPLQ. 2 IQ domains span residues 163-191 and 192-214; these read EEFA…GLVK and LQAL…CMQA. Positions 214–231 are calmodulin-binding; that stretch reads ALITLQAKAREQRIRMIG. Low complexity predominate over residues 332–345; it reads QSSKAKARSQSAPK. The interval 332 to 398 is disordered; it reads QSSKAKARSQ…TAKESQQHHH (67 aa). Residues 379-392 are compositionally biased toward polar residues; that stretch reads QRSSSQLGSNTAKE.

This sequence belongs to the IQD family. Binds to multiple calmodulin (CaM) in the presence of Ca(2+) and CaM-like proteins.

The protein localises to the cytoplasm. Its subcellular location is the cytoskeleton. It localises to the cell membrane. Functionally, may be involved in cooperative interactions with calmodulins or calmodulin-like proteins. Recruits calmodulin proteins to microtubules, thus being a potential scaffold in cellular signaling and trafficking. Acts as a positive regulator of trichome branch initiation. May associate with nucleic acids and regulate gene expression at the transcriptional or post-transcriptional level. The chain is Protein IQ-DOMAIN 19 from Arabidopsis thaliana (Mouse-ear cress).